A 363-amino-acid chain; its full sequence is Flagellar P-ring protein 2 (363 aa).

The N-terminal stretch at 1–20 is a signal peptide; sequence MKRIVLLLMSVALFSTAAQA.

It belongs to the FlgI family. In terms of assembly, the basal body constitutes a major portion of the flagellar organelle and consists of four rings (L,P,S, and M) mounted on a central rod.

It is found in the periplasm. The protein localises to the bacterial flagellum basal body. In terms of biological role, assembles around the rod to form the L-ring and probably protects the motor/basal body from shearing forces during rotation. The sequence is that of Flagellar P-ring protein 2 (flgI2) from Vibrio parahaemolyticus serotype O3:K6 (strain RIMD 2210633).